Here is a 265-residue protein sequence, read N- to C-terminus: Undecaprenyl-diphosphatase (265 aa).

7 consecutive transmembrane segments (helical) span residues 42–62, 82–102, 108–128, 143–163, 181–201, 221–241, and 248–264; these read AATFEVAIQLGAILAVVVLYW, GIMLLLLTSLPASVLGLAAHS, LFTPSTVAIALAVGAIFMLLV, MSPALALGIGCFQCLALWPGF, GLAAEYSFIAAVPIMFAATGY, GFVVSFLSAWAAVKLFIALVG, and FAWYRLAIAPLVYYFMA.

This sequence belongs to the UppP family.

The protein resides in the cell inner membrane. It catalyses the reaction di-trans,octa-cis-undecaprenyl diphosphate + H2O = di-trans,octa-cis-undecaprenyl phosphate + phosphate + H(+). Catalyzes the dephosphorylation of undecaprenyl diphosphate (UPP). Confers resistance to bacitracin. The chain is Undecaprenyl-diphosphatase from Nitratidesulfovibrio vulgaris (strain DP4) (Desulfovibrio vulgaris).